Reading from the N-terminus, the 336-residue chain is D-altritol 5-dehydrogenase (336 aa).

Zn(2+) is bound by residues Cys37, His59, Glu60, Cys89, Cys92, Cys95, and Cys103.

It belongs to the zinc-containing alcohol dehydrogenase family. Zn(2+) is required as a cofactor.

It catalyses the reaction D-altritol + NAD(+) = keto-D-tagatose + NADH + H(+). It functions in the pathway carbohydrate metabolism. Functionally, involved in D-altritol catabolism. Catalyzes the oxidation of D-altritol to D-tagatose. The protein is D-altritol 5-dehydrogenase of Agrobacterium fabrum (strain C58 / ATCC 33970) (Agrobacterium tumefaciens (strain C58)).